The chain runs to 302 residues: Alpha-ketoglutarate-dependent dioxygenase alkB homolog 4 (302 aa).

An N-acetylalanine modification is found at Ala2. Thr8 carries the phosphothreonine modification. The Fe2OG dioxygenase domain occupies 150–274 (PVEQCNLDYC…RVCVTFRELS (125 aa)). Fe cation is bound by residues His169, Asp171, and His254. 2-oxoglutarate is bound at residue Arg265.

This sequence belongs to the alkB family. Interacts with ZFHX3, MLLT3, MLLT1, HSF4, EP300, TES, EIF3C, MTMR6 and PSMA6. Fe(2+) serves as cofactor. In terms of tissue distribution, widely expressed, with highest expression in pancreas, ovary and spleen.

It is found in the cytoplasm. The protein localises to the nucleus. The protein resides in the nucleolus. Its subcellular location is the midbody. The catalysed reaction is an N(6)-methyl-2'-deoxyadenosine in DNA + 2-oxoglutarate + O2 = a 2'-deoxyadenosine in DNA + formaldehyde + succinate + CO2. It catalyses the reaction N(6)-methyl-L-lysyl-[protein] + 2-oxoglutarate + O2 = L-lysyl-[protein] + formaldehyde + succinate + CO2. Its function is as follows. Dioxygenase that mediates demethylation of actin monomethylated at 'Lys-84' (K84me1), thereby acting as a regulator of actomyosin-processes. Demethylation of actin K84me1 is required for maintaining actomyosin dynamics supporting normal cleavage furrow ingression during cytokinesis and cell migration. In addition to proteins, also demethylates DNA: specifically demethylates DNA methylated on the 6th position of adenine (N(6)-methyladenosine) DNA, thereby regulating Polycomb silencing. The chain is Alpha-ketoglutarate-dependent dioxygenase alkB homolog 4 from Homo sapiens (Human).